Reading from the N-terminus, the 172-residue chain is uncharacterized protein (172 aa).

The disordered stretch occupies residues 130-154 (EQEKGAAPQEGKDWQVISEEDKKNQ).

This is an uncharacterized protein from Bacillus subtilis (strain 168).